A 193-amino-acid polypeptide reads, in one-letter code: Potassium-transporting ATPase KdpC subunit (193 aa).

The helical transmembrane segment at 14–34 (ITFTFLVLCGLVYPLIVTGIA) threads the bilayer.

The protein belongs to the KdpC family. As to quaternary structure, the system is composed of three essential subunits: KdpA, KdpB and KdpC.

Its subcellular location is the cell membrane. In terms of biological role, part of the high-affinity ATP-driven potassium transport (or Kdp) system, which catalyzes the hydrolysis of ATP coupled with the electrogenic transport of potassium into the cytoplasm. This subunit acts as a catalytic chaperone that increases the ATP-binding affinity of the ATP-hydrolyzing subunit KdpB by the formation of a transient KdpB/KdpC/ATP ternary complex. The sequence is that of Potassium-transporting ATPase KdpC subunit from Bacillus cereus (strain AH820).